Here is a 114-residue protein sequence, read N- to C-terminus: Protein gamma (114 aa).

The polypeptide is Protein gamma (gamma) (Bovine ephemeral fever virus (strain BB7721) (BEFV)).